A 65-amino-acid polypeptide reads, in one-letter code: Sulfur carrier protein TtuB (65 aa).

1-thioglycine; alternate is present on Gly65. A Glycyl adenylate; alternate modification is found at Gly65. Gly65 is covalently cross-linked (Glycyl cysteine thioester (Gly-Cys) (interchain with C-192 in TtuC); alternate). Gly65 is covalently cross-linked (Glycyl lysine isopeptide (Gly-Lys) (interchain with K-? in acceptor proteins); alternate).

It belongs to the TtuB family. Is able to form a heterocomplex with TtuA. Post-translationally, the C-terminal glycine residue of TtuB is first activated by TtuC as an acyl-adenylate (TtuB-COAMP), and then converted to the thiocarboxylate form (TtuB-COSH) by the cysteine desulfurases IscS or SufS.

It functions in the pathway tRNA modification. In terms of biological role, required for the 2-thiolation of 5-methyluridine residue at position 54 in the T loop of tRNAs, leading to 5-methyl-2-thiouridine (m(5)s(2)U or s(2)T). This modification allows thermal stabilization of tRNAs in thermophilic microorganisms, and is essential for cell growth at high temperatures. Thiocarboxylated TtuB functions as the sulfur donor in the sulfurtransferase reaction catalyzed by TtuA. TtuB also functions as a protein modifier covalently attached to lysine residues of the target proteins TtuA and TtuC. TtuB conjugation might play a regulatory role to ensure appropriate sulfur transfer in cells. The protein is Sulfur carrier protein TtuB of Thermus thermophilus (strain ATCC BAA-163 / DSM 7039 / HB27).